We begin with the raw amino-acid sequence, 527 residues long: Glucose-6-phosphate isomerase (527 aa).

E323 (proton donor) is an active-site residue. Catalysis depends on residues H352 and K454.

It belongs to the GPI family.

The protein localises to the cytoplasm. It catalyses the reaction alpha-D-glucose 6-phosphate = beta-D-fructose 6-phosphate. Its pathway is carbohydrate biosynthesis; gluconeogenesis. It functions in the pathway carbohydrate degradation; glycolysis; D-glyceraldehyde 3-phosphate and glycerone phosphate from D-glucose: step 2/4. Functionally, catalyzes the reversible isomerization of glucose-6-phosphate to fructose-6-phosphate. In Prochlorococcus marinus (strain MIT 9312), this protein is Glucose-6-phosphate isomerase.